Reading from the N-terminus, the 427-residue chain is Serine/threonine-protein kinase AFC2 (427 aa).

A Protein kinase domain is found at Tyr98–Phe423. ATP contacts are provided by residues Met104 to Val112 and Lys127. The active-site Proton acceptor is the Asp223.

Belongs to the protein kinase superfamily. CMGC Ser/Thr protein kinase family. Lammer subfamily.

It catalyses the reaction L-seryl-[protein] + ATP = O-phospho-L-seryl-[protein] + ADP + H(+). The enzyme catalyses L-threonyl-[protein] + ATP = O-phospho-L-threonyl-[protein] + ADP + H(+). It carries out the reaction L-tyrosyl-[protein] + ATP = O-phospho-L-tyrosyl-[protein] + ADP + H(+). This is Serine/threonine-protein kinase AFC2 (AFC2) from Arabidopsis thaliana (Mouse-ear cress).